The following is a 949-amino-acid chain: Translation initiation factor IF-2 (949 aa).

Disordered stretches follow at residues 61 to 122, 139 to 159, and 171 to 284; these read IQAN…PIIK, VENT…QKLQ, and LTQS…NKSH. Basic and acidic residues-rich tracts occupy residues 112-122 and 150-159; these read KKKEAPAPIIK and QIEKAKQKLQ. Residues 174–190 are compositionally biased toward low complexity; it reads SNTNTTNNANSASNVSN. Positions 191–208 are enriched in basic and acidic residues; that stretch reads AKKEISEVKKQEQEIKRH. Positions 209-220 are enriched in basic residues; the sequence is ENIKRRTGFRVI. Residues 249-264 show a composition bias toward basic and acidic residues; sequence EDIKKEWQEKDKQETK. The tr-type G domain maps to 448–617; that stretch reads ERPPVVTIMG…LIQADIMELK (170 aa). Residues 457–464 are G1; it reads GHVDHGKT. 457-464 contributes to the GTP binding site; the sequence is GHVDHGKT. The interval 482–486 is G2; it reads GITQH. Residues 503–506 form a G3 region; sequence DTPG. GTP contacts are provided by residues 503–507 and 557–560; these read DTPGH and NKMD. A G4 region spans residues 557–560; the sequence is NKMD. Positions 593–595 are G5; sequence SAK.

The protein belongs to the TRAFAC class translation factor GTPase superfamily. Classic translation factor GTPase family. IF-2 subfamily.

It localises to the cytoplasm. One of the essential components for the initiation of protein synthesis. Protects formylmethionyl-tRNA from spontaneous hydrolysis and promotes its binding to the 30S ribosomal subunits. Also involved in the hydrolysis of GTP during the formation of the 70S ribosomal complex. This chain is Translation initiation factor IF-2 (infB), found in Helicobacter pylori (strain J99 / ATCC 700824) (Campylobacter pylori J99).